The chain runs to 347 residues: Protein-glutamate methylesterase/protein-glutamine glutaminase 2 (347 aa).

In terms of domain architecture, Response regulatory spans 2 to 119; that stretch reads RVMIVDDSAV…LGGADLYRKD (118 aa). Position 52 is a 4-aspartylphosphate (D52). Residues 131 to 153 form a disordered region; sequence AARPAPPQAAPRPTLAPPSSDPA. A compositionally biased stretch (pro residues) spans 134-150; sequence PAPPQAAPRPTLAPPSS. Residues 152-346 form the CheB-type methylesterase domain; sequence PAGPIEAVVV…PYIASRARSV (195 aa). Catalysis depends on residues S164, H191, and D288.

It belongs to the CheB family. Post-translationally, phosphorylated by CheA. Phosphorylation of the N-terminal regulatory domain activates the methylesterase activity.

It is found in the cytoplasm. The catalysed reaction is [protein]-L-glutamate 5-O-methyl ester + H2O = L-glutamyl-[protein] + methanol + H(+). It carries out the reaction L-glutaminyl-[protein] + H2O = L-glutamyl-[protein] + NH4(+). Involved in chemotaxis. Part of a chemotaxis signal transduction system that modulates chemotaxis in response to various stimuli. Catalyzes the demethylation of specific methylglutamate residues introduced into the chemoreceptors (methyl-accepting chemotaxis proteins or MCP) by CheR. Also mediates the irreversible deamidation of specific glutamine residues to glutamic acid. The sequence is that of Protein-glutamate methylesterase/protein-glutamine glutaminase 2 from Caulobacter vibrioides (strain ATCC 19089 / CIP 103742 / CB 15) (Caulobacter crescentus).